The following is a 61-amino-acid chain: Small ribosomal subunit protein uS14 (61 aa).

Residues C24, C27, C40, and C43 each coordinate Zn(2+).

Belongs to the universal ribosomal protein uS14 family. Zinc-binding uS14 subfamily. As to quaternary structure, part of the 30S ribosomal subunit. Contacts proteins S3 and S10. Requires Zn(2+) as cofactor.

In terms of biological role, binds 16S rRNA, required for the assembly of 30S particles and may also be responsible for determining the conformation of the 16S rRNA at the A site. In Clostridioides difficile (strain 630) (Peptoclostridium difficile), this protein is Small ribosomal subunit protein uS14.